The following is a 454-amino-acid chain: tRNA modification GTPase MnmE (454 aa).

3 residues coordinate (6S)-5-formyl-5,6,7,8-tetrahydrofolate: R23, E80, and K120. The TrmE-type G domain maps to 216–377; sequence GMKVVIAGRP…LRNHLKQSMG (162 aa). N226 contacts K(+). GTP-binding positions include 226-231, 245-251, 270-273, 335-338, and 358-360; these read NAGKSS, TDIAGTT, DTAG, NKAD, and SAR. Mg(2+) is bound at residue S230. The K(+) site is built by T245, I247, and T250. Residue T251 coordinates Mg(2+). Position 454 (K454) interacts with (6S)-5-formyl-5,6,7,8-tetrahydrofolate.

The protein belongs to the TRAFAC class TrmE-Era-EngA-EngB-Septin-like GTPase superfamily. TrmE GTPase family. As to quaternary structure, homodimer. Heterotetramer of two MnmE and two MnmG subunits. The cofactor is K(+).

It localises to the cytoplasm. Its function is as follows. Exhibits a very high intrinsic GTPase hydrolysis rate. Involved in the addition of a carboxymethylaminomethyl (cmnm) group at the wobble position (U34) of certain tRNAs, forming tRNA-cmnm(5)s(2)U34. The protein is tRNA modification GTPase MnmE of Shigella dysenteriae serotype 1 (strain Sd197).